Here is a 380-residue protein sequence, read N- to C-terminus: MKWLVLLGLVSISECIVKIPLRRVKTMRKTLSEKNMLNNFLKEHAYRLSQISFRGSNLTIHPLRNTKDLVYLGNITIGTPPQEFQVVSDTGSSDLWVPSDFCAIEACSLHTRFRHLQSSTFRPTNRTFSITYGCGTVKGVVVHDTVRIGDLVSTDQPFGLSTAEHVSRCTPFDGVLGLNYPSISFWSTIPIFDKLKNEGAISEPVFAFYLSKDGQEGSVVMFGGVDHRYYKGELNWVPLIPAGNWMVHMDRIYIERNVIACSAGCKAVVDTGAAFIEGPKSQVDNMQKFIGARPRGSKYYVPCSVVNTLPSIIFRINSINYPVPGRAYILKNHRGRCYTTFKENQWSPSTEIWILGDVFLRLYFSVFDRGHDRIGLARAV.

Residues methionine 1–cysteine 15 form the signal peptide. Residues isoleucine 16–phenylalanine 53 constitute a propeptide, activation peptide. 2 N-linked (GlcNAc...) asparagine glycosylation sites follow: asparagine 57 and asparagine 74. The 307-residue stretch at tyrosine 71–alanine 377 folds into the Peptidase A1 domain. The active site involves aspartate 89. Cysteine 102 and cysteine 107 form a disulfide bridge. N-linked (GlcNAc...) asparagine glycosylation is present at asparagine 125. An intrachain disulfide couples cysteine 261 to cysteine 265. Residue aspartate 270 is part of the active site. Cysteines 303 and 337 form a disulfide.

Belongs to the peptidase A1 family. Trophoblast and placental tissue. Produced specifically in the invasive binucleate cells of the placenta.

The protein localises to the secreted. It is found in the extracellular space. The sequence is that of Pregnancy-associated glycoprotein 6 from Ovis aries (Sheep).